The primary structure comprises 134 residues: uncharacterized protein (134 aa).

Helical transmembrane passes span 8–28 (FTSL…TVMY), 54–74 (GFQA…TFLL), and 113–133 (LACF…RLVD).

The protein belongs to the cornichon family.

It is found in the endoplasmic reticulum membrane. This is an uncharacterized protein from Schizosaccharomyces pombe (strain 972 / ATCC 24843) (Fission yeast).